Consider the following 390-residue polypeptide: Glutamate 5-kinase (390 aa).

K29 contacts ATP. Substrate contacts are provided by S69, D156, and N168. 188-189 (TD) is an ATP binding site. Residues 295 to 374 (SGSLIVDAGA…EQFDRILGNN (80 aa)) enclose the PUA domain.

It belongs to the glutamate 5-kinase family.

Its subcellular location is the cytoplasm. It catalyses the reaction L-glutamate + ATP = L-glutamyl 5-phosphate + ADP. The protein operates within amino-acid biosynthesis; L-proline biosynthesis; L-glutamate 5-semialdehyde from L-glutamate: step 1/2. In terms of biological role, catalyzes the transfer of a phosphate group to glutamate to form L-glutamate 5-phosphate. The sequence is that of Glutamate 5-kinase from Psychrobacter cryohalolentis (strain ATCC BAA-1226 / DSM 17306 / VKM B-2378 / K5).